Consider the following 398-residue polypeptide: Phosphoglycerate kinase (398 aa).

Substrate is bound by residues 22 to 24 (DFN), R38, 61 to 64 (HLGR), R120, and R153. Residues K206, G297, E328, and 354–357 (GGDT) each bind ATP.

The protein belongs to the phosphoglycerate kinase family. Monomer.

Its subcellular location is the cytoplasm. It catalyses the reaction (2R)-3-phosphoglycerate + ATP = (2R)-3-phospho-glyceroyl phosphate + ADP. Its pathway is carbohydrate degradation; glycolysis; pyruvate from D-glyceraldehyde 3-phosphate: step 2/5. This chain is Phosphoglycerate kinase, found in Nautilia profundicola (strain ATCC BAA-1463 / DSM 18972 / AmH).